Here is a 673-residue protein sequence, read N- to C-terminus: Xyloglucan glycosyltransferase 4 (673 aa).

2 consecutive transmembrane segments (helical) span residues 90 to 110 (FIKACLVISIIALSIEIVAHF) and 144 to 164 (IAPLVISLSRFCTVLFLIQSL). Asp238 is an active-site residue. Substrate is bound by residues Asp297 and Asp299. The active site involves Asp391. The next 2 membrane-spanning stretches (helical) occupy residues 469–489 (LILPFYSFTLFCIILPLTMFI) and 494–514 (LPLWIICYVPIFISLLNILPS). The residue at position 581 (Ser581) is a Phosphoserine. Helical transmembrane passes span 623–643 (VFKKELGLAFLLLTAAARSFL) and 648–668 (LHFYFLLFQGLSFLVVGLDLI).

It belongs to the glycosyltransferase 2 family. Plant cellulose synthase-like C subfamily. In terms of assembly, homodimer. Interacts with XXT5. Interacts with FUT1, MUR3 and XLT2. In terms of tissue distribution, expressed in seedlings, roots, leaves, stems, flowers and seeds.

Its subcellular location is the golgi apparatus membrane. Its function is as follows. Beta-1,4-glucan synthase rather involved in the synthesis of the xyloglucan backbone than cellulose. Seems to work simultaneously with xyloglucan 6-xylosyltransferase. Xyloglucan is a noncellulosic polysaccharides of plant cell wall and consists of a glucan backbone substituted by xylose, galactose and fucose. Associates with other xyloglucan-synthesizing enzymes to form multiprotein complexes for xyloglucan synthesis in the Golgi. The chain is Xyloglucan glycosyltransferase 4 from Arabidopsis thaliana (Mouse-ear cress).